Consider the following 470-residue polypeptide: Cysteine--tRNA ligase (470 aa).

Cysteine 28 is a Zn(2+) binding site. The short motif at 30 to 40 (PTVYNYIHIGN) is the 'HIGH' region element. 3 residues coordinate Zn(2+): cysteine 212, histidine 237, and glutamate 241. A 'KMSKS' region motif is present at residues 271-275 (KMSKS). Lysine 274 is a binding site for ATP.

The protein belongs to the class-I aminoacyl-tRNA synthetase family. As to quaternary structure, monomer. Zn(2+) is required as a cofactor.

Its subcellular location is the cytoplasm. The catalysed reaction is tRNA(Cys) + L-cysteine + ATP = L-cysteinyl-tRNA(Cys) + AMP + diphosphate. The protein is Cysteine--tRNA ligase of Pediococcus pentosaceus (strain ATCC 25745 / CCUG 21536 / LMG 10740 / 183-1w).